Reading from the N-terminus, the 112-residue chain is Cytoplasmic envelopment protein 3 (112 aa).

A lipid anchor (N-myristoyl glycine; by host) is attached at G2. The tract at residues 84 to 112 is disordered; that stretch reads GANKGGGKRTSSLKSAKNGAGVKKKVRAL.

It belongs to the herpesviridae cytoplasmic envelopment protein 3 family. Interacts with cytoplasmic envelopment protein 2; this interaction is essential for the proper localization of each protein to the assembly complex and thus for the production of infectious virus. Post-translationally, myristoylation and palmitoylation (probably on one or more of the nearby cysteines at the N-terminus) enable membrane-binding and Golgi apparatus-specific targeting and are essential for efficient packaging. Phosphorylated. Phosphorylation does not seem to be required for recycling to the host Golgi apparatus. Packaging is selective for underphosphorylated forms.

The protein localises to the virion tegument. It is found in the virion membrane. Its subcellular location is the host cell membrane. The protein resides in the host Golgi apparatus membrane. In terms of biological role, plays an important role in the cytoplasmic envelopment of tegument proteins and capsids during the assembly and egress processes. Also participates in viral entry at the fusion step probably by regulating the core fusion machinery. The protein is Cytoplasmic envelopment protein 3 (UL99) of Murid herpesvirus 1 (strain K181) (MuHV-1).